The primary structure comprises 166 residues: Ribosome maturation factor RimP (166 aa).

The protein belongs to the RimP family.

Its subcellular location is the cytoplasm. Required for maturation of 30S ribosomal subunits. This Paramagnetospirillum magneticum (strain ATCC 700264 / AMB-1) (Magnetospirillum magneticum) protein is Ribosome maturation factor RimP.